Here is an 840-residue protein sequence, read N- to C-terminus: Mechanosensitive ion channel protein Msy2 (840 aa).

Residues methionine 1–arginine 68 are Cytoplasmic-facing. Residues tryptophan 69–serine 89 traverse the membrane as a helical segment. Residues proline 90–arginine 100 lie on the Lumenal side of the membrane. A helical transmembrane segment spans residues isoleucine 101 to isoleucine 121. Residues alanine 122 to proline 126 lie on the Cytoplasmic side of the membrane. A helical membrane pass occupies residues tyrosine 127 to leucine 147. The Lumenal portion of the chain corresponds to threonine 148–glutamate 151. Residues methionine 152 to isoleucine 172 traverse the membrane as a helical segment. Residues glycine 173–glycine 225 lie on the Cytoplasmic side of the membrane. The helical transmembrane segment at alanine 226–phenylalanine 246 threads the bilayer. Over histidine 247 to glycine 449 the chain is Lumenal. The EF-hand domain occupies isoleucine 392–glutamate 427. Residues leucine 450–alanine 491 form a helical membrane-spanning segment. Over glutamine 492 to tyrosine 840 the chain is Cytoplasmic. Disordered stretches follow at residues glutamate 677–aspartate 730 and glutamate 775–alanine 819. Positions serine 688–serine 700 are enriched in low complexity. Positions serine 708–aspartate 730 are enriched in basic and acidic residues. Low complexity predominate over residues serine 776–alanine 819.

This sequence belongs to the MscS (TC 1.A.23) family.

The protein resides in the endoplasmic reticulum membrane. Its function is as follows. Regulates intracellular calcium levels and cell volume for survival in response to hypo-osmotic shock. Involved in maintaining vacuole integrity and protecting the nuclear envelope upon hypo-osmotic shock. The protein is Mechanosensitive ion channel protein Msy2 of Schizosaccharomyces pombe (strain 972 / ATCC 24843) (Fission yeast).